The primary structure comprises 347 residues: Eukaryotic translation initiation factor 3 subunit I (347 aa).

5 WD repeats span residues 8–49 (GHER…GTLD), 51–89 (HMGSIWSIDSDHTSLYCVTGSADYTIKVWTLMNGQCVQT), 149–190 (THEG…KLVE), 194–233 (VHKDSVSDLQFSPDRTYFITCSRDSNAHIIDIETFKVLKT), and 291–330 (GHFGPLNSIAVSPQGTSYTSGGEEGLVRLHHFEKSYFDFK).

The protein belongs to the eIF-3 subunit I family. Component of the eukaryotic translation initiation factor 3 (eIF-3) complex.

The protein resides in the cytoplasm. Component of the eukaryotic translation initiation factor 3 (eIF-3) complex, which is involved in protein synthesis of a specialized repertoire of mRNAs and, together with other initiation factors, stimulates binding of mRNA and methionyl-tRNAi to the 40S ribosome. The eIF-3 complex specifically targets and initiates translation of a subset of mRNAs involved in cell proliferation. The chain is Eukaryotic translation initiation factor 3 subunit I from Candida glabrata (strain ATCC 2001 / BCRC 20586 / JCM 3761 / NBRC 0622 / NRRL Y-65 / CBS 138) (Yeast).